The following is a 354-amino-acid chain: Cellular communication network factor 6 (354 aa).

Residues 1 to 23 form the signal peptide; the sequence is MQGLLFSTLLLAGLAQFCCRVQG. Positions 44-117 constitute an IGFBP N-terminal domain; sequence RKQFCHWPCK…RYETGVCAYL (74 aa). 6 cysteine pairs are disulfide-bonded: Cys-48–Cys-72, Cys-52–Cys-74, Cys-54–Cys-75, Cys-61–Cys-78, Cys-86–Cys-100, and Cys-92–Cys-114. The N-linked (GlcNAc...) asparagine glycan is linked to Asn-178. One can recognise a TSP type-1 domain in the interval 208–253; the sequence is KCLVQATKWTPCSRTCGMGISNRVTNENSNCEMRKEKRLCYIQPCD. Intrachain disulfides connect Cys-268–Cys-305, Cys-285–Cys-319, Cys-296–Cys-335, Cys-299–Cys-337, and Cys-304–Cys-341. Residues 268-342 form the CTCK domain; the sequence is CQPTFQLSKA…TSCVCQRNCR (75 aa). The N-linked (GlcNAc...) asparagine glycan is linked to Asn-308.

The protein belongs to the CCN family. As to expression, predominant expression in adult kidney and testis and fetal kidney. Weaker expression found in placenta, ovary, prostate and small intestine. Also expressed in skeletally-derived cells such as synoviocytes and articular cartilage chondrocytes.

The protein resides in the secreted. It is found in the mitochondrion. In terms of biological role, plays a role in mitochondrial electron transport and mitochondrial respiration. Through its regulation of the mitochondrial function may play a role in normal postnatal skeletal growth and cartilage homeostasis. In Homo sapiens (Human), this protein is Cellular communication network factor 6.